The primary structure comprises 300 residues: Ribosomal protein bS6--L-glutamate ligase (300 aa).

Positions 104 to 287 (MQLLARQGID…IAGKMIRWIE (184 aa)) constitute an ATP-grasp domain. Residues lysine 141, 178–179 (EY), aspartate 187, and 211–213 (RSN) each bind ATP. Mg(2+) is bound by residues aspartate 248, glutamate 260, and asparagine 262. The Mn(2+) site is built by aspartate 248, glutamate 260, and asparagine 262.

Belongs to the RimK family. It depends on Mg(2+) as a cofactor. Requires Mn(2+) as cofactor.

An L-glutamate ligase that catalyzes the ATP-dependent post-translational addition of glutamate residues to the C-terminus of ribosomal protein bS6 (RpsF). Is also able to catalyze the synthesis of poly-alpha-glutamate in vitro, via ATP hydrolysis from unprotected glutamate as substrate. The number of glutamate residues added to either RpsF or to poly-alpha-glutamate changes with pH. The protein is Ribosomal protein bS6--L-glutamate ligase of Shigella flexneri serotype 5b (strain 8401).